The primary structure comprises 324 residues: HSF-like protein (324 aa).

The N-terminal stretch at 1–19 is a signal peptide; it reads MNSLVALVLLGQIIGSTVS. Cystatin fetuin-A-type domains lie at 21-130 and 141-254; these read QLGP…VKCS and RDCP…SDCV. 6 disulfide bridges follow: Cys-28–Cys-315, Cys-85–Cys-96, Cys-110–Cys-129, Cys-143–Cys-146, Cys-205–Cys-217, and Cys-230–Cys-253. N-linked (GlcNAc...) asparagine glycosylation is present at Asn-95. N-linked (GlcNAc...) asparagine glycosylation is present at Asn-204. Residue Asn-282 is glycosylated (N-linked (GlcNAc...) asparagine).

The protein belongs to the fetuin family. Homodimer. In terms of tissue distribution, expressed by the liver.

Its subcellular location is the secreted. In terms of biological role, may not have antihemorrhagic activity. This is HSF-like protein from Protobothrops flavoviridis (Habu).